A 369-amino-acid chain; its full sequence is Aminomethyltransferase (369 aa).

Belongs to the GcvT family. As to quaternary structure, the glycine cleavage system is composed of four proteins: P, T, L and H.

It catalyses the reaction N(6)-[(R)-S(8)-aminomethyldihydrolipoyl]-L-lysyl-[protein] + (6S)-5,6,7,8-tetrahydrofolate = N(6)-[(R)-dihydrolipoyl]-L-lysyl-[protein] + (6R)-5,10-methylene-5,6,7,8-tetrahydrofolate + NH4(+). The glycine cleavage system catalyzes the degradation of glycine. The polypeptide is Aminomethyltransferase (Xanthomonas campestris pv. campestris (strain 8004)).